A 249-amino-acid polypeptide reads, in one-letter code: MTGENTGDNPRRVLLKLSGEAFGGGKVGIDTTVVRRIAEEIVPAVKQGVQVAIVVGGGNFFRGAELQQAGIDRSRGDYMGMLGTVMNCLALQDFLEQEGQATRVQTAITMGQVAEPYIPLKAIRHLEKGRVVIFGAGAGMPYFSTDTVSIQRSLEIHCDEVLMGKNGVDGVYTADPRKDENAKRFATLSYNRALVDNLAVMDAAALSMARDNKQRIRVFGLEGAGNVTQALLGEEIGTMVSTAESTLAE.

An ATP-binding site is contributed by 16 to 19 (KLSG). Residue G57 coordinates UMP. The ATP site is built by G58 and R62. UMP contacts are provided by residues D77 and 138–145 (AGMPYFST). The ATP site is built by N166, Y172, and D175.

It belongs to the UMP kinase family. In terms of assembly, homohexamer.

It is found in the cytoplasm. It carries out the reaction UMP + ATP = UDP + ADP. The protein operates within pyrimidine metabolism; CTP biosynthesis via de novo pathway; UDP from UMP (UMPK route): step 1/1. Its activity is regulated as follows. Inhibited by UTP. Its function is as follows. Catalyzes the reversible phosphorylation of UMP to UDP. The chain is Uridylate kinase from Bifidobacterium adolescentis (strain ATCC 15703 / DSM 20083 / NCTC 11814 / E194a).